We begin with the raw amino-acid sequence, 528 residues long: ATP synthase F(1) complex catalytic subunit beta, mitochondrial (528 aa).

A mitochondrion-targeting transit peptide spans 1 to 46; the sequence is MLGLVGRVVAASASGALRGLSPSAPLPQAQLLLRAAPAALQPARDY. Ser-106 carries O-linked (GlcNAc) serine glycosylation. N6-acetyllysine; alternate is present on residues Lys-124 and Lys-161. An N6-succinyllysine; alternate mark is found at Lys-124 and Lys-161. At Lys-198 the chain carries N6-acetyllysine. Gly-209, Val-210, Gly-211, Lys-212, Thr-213, and Val-214 together coordinate ADP. Gly-209 contributes to the ATP binding site. 5 residues coordinate phosphate: Gly-209, Val-210, Gly-211, Lys-212, and Thr-213. ATP is bound by residues Gly-211, Lys-212, Thr-213, and Val-214. Residue Thr-213 participates in Mg(2+) binding. Glu-238 is a binding site for Mg(2+). Residue Arg-239 coordinates ATP. Lys-259 and Lys-264 each carry N6-acetyllysine; alternate. N6-succinyllysine; alternate occurs at positions 259 and 264. Thr-312 is modified (phosphothreonine). At Ser-415 the chain carries Phosphoserine. The residue at position 426 (Lys-426) is an N6-acetyllysine. Ser-433 bears the Phosphoserine mark. 2 positions are modified to N6-acetyllysine: Lys-480 and Lys-485. Lys-522 carries the post-translational modification N6-acetyllysine; alternate. The residue at position 522 (Lys-522) is an N6-succinyllysine; alternate.

This sequence belongs to the ATPase alpha/beta chains family. In terms of assembly, homotrimer. Component of the ATP synthase complex composed at least of ATP5F1A/subunit alpha, ATP5F1B/subunit beta, ATP5MC1/subunit c (homooctomer), MT-ATP6/subunit a, MT-ATP8/subunit 8, ATP5ME/subunit e, ATP5MF/subunit f, ATP5MG/subunit g, ATP5MK/subunit k, ATP5MJ/subunit j, ATP5F1C/subunit gamma, ATP5F1D/subunit delta, ATP5F1E/subunit epsilon, ATP5PF/subunit F6, ATP5PB/subunit b, ATP5PD/subunit d, ATP5PO/subunit OSCP. ATP synthase complex consists of a soluble F(1) head domain (subunits alpha(3) and beta(3)) - the catalytic core - and a membrane F(0) domain - the membrane proton channel (subunits c, a, 8, e, f, g, k and j). These two domains are linked by a central stalk (subunits gamma, delta, and epsilon) rotating inside the F1 region and a stationary peripheral stalk (subunits F6, b, d, and OSCP). Interacts with PPIF. Interacts with BCL2L1 isoform BCL-X(L); the interaction mediates the association of BCL2L1 isoform BCL-X(L) with the mitochondrial membrane F(1)F(0) ATP synthase and enhances neurons metabolic efficiency. Interacts with CLN5 and PPT1. Interacts with S100A1; this interaction increases F1-ATPase activity. Interacts with MTLN. Interacts with TTC5/STRAP; the interaction results in decreased mitochondrial ATP production.

The protein resides in the mitochondrion inner membrane. It carries out the reaction ATP + H2O + 4 H(+)(in) = ADP + phosphate + 5 H(+)(out). Its function is as follows. Catalytic subunit beta, of the mitochondrial membrane ATP synthase complex (F(1)F(0) ATP synthase or Complex V) that produces ATP from ADP in the presence of a proton gradient across the membrane which is generated by electron transport complexes of the respiratory chain. ATP synthase complex consist of a soluble F(1) head domain - the catalytic core - and a membrane F(1) domain - the membrane proton channel. These two domains are linked by a central stalk rotating inside the F(1) region and a stationary peripheral stalk. During catalysis, ATP synthesis in the catalytic domain of F(1) is coupled via a rotary mechanism of the central stalk subunits to proton translocation. In vivo, can only synthesize ATP although its ATP hydrolase activity can be activated artificially in vitro. With the subunit alpha (ATP5F1A), forms the catalytic core in the F(1) domain. In Bos taurus (Bovine), this protein is ATP synthase F(1) complex catalytic subunit beta, mitochondrial.